Reading from the N-terminus, the 357-residue chain is MLSLQTLAKKVVACNYLSSDYDYTLQRFGLWWDLGPIHLCNTCKQIFSYKHLQCFSEDDLCLEAALVKAVKSDNLELIRLFVDWGANPEYGLIRVPAVHLKRLCMELGGLTPVSESRLLEILKEVADLKSCAGVLLGYDMFCHNPLLETVTRTTLDTVMYTRSKIPLTGDTAHLLLSKFWFALALRHNFTKAIHYFYEKHKNQLYWRLTCSLYFNNIFDLHELCCKKEICISPNLMMKFACLREENYAAIYYCHMLGASLDYGMNLSIYNNNTLNLFFCIDLGATNFDRARLIARRVYMYNLSNLFLVKQLFSRDVSLILDLTEPQAIYDMLNTYTSKNLKQAEEYFTAHPEIVVID.

This sequence belongs to the asfivirus MGF 360 family. As to quaternary structure, interacts with host IRF3 and TRIM21; these interactions mediates degradation of IRF3 through TRIM21 and ubiquitin-meditated proteolysis.

The protein localises to the host cytoplasm. Its function is as follows. Plays a role in virus cell tropism, and may be required for efficient virus replication in macrophages. Also inhibits the host cGAS/STING-mediated type I interferon production by inducing host IRF3 degradation through the proteasome pathway. This is Protein MGF 360-14L from Ornithodoros (relapsing fever ticks).